The primary structure comprises 69 residues: Probable cold shock protein y4cH (69 aa).

The region spanning 5-65 is the CSD domain; the sequence is GTVKWFNATK…DRKSGKMSAD (61 aa).

It localises to the cytoplasm. This chain is Probable cold shock protein y4cH, found in Sinorhizobium fredii (strain NBRC 101917 / NGR234).